The sequence spans 66 residues: Movement protein TGBp3 (66 aa).

Residues 1–2 lie on the Lumenal side of the membrane; the sequence is MD. The chain crosses the membrane as a helical span at residues 3 to 23; that stretch reads FTTLVIIGVYLLVFIVYFAKI. At 24–66 the chain is on the cytoplasmic side; sequence NTSMCTISISGASVEISGCDNPALFEILPNLKPFDHGLSVPSI.

It belongs to the Tymovirales TGBp3 protein family.

The protein localises to the host endoplasmic reticulum membrane. Functionally, plays a role in viral cell-to-cell propagation, by facilitating genome transport to neighboring plant cells through plasmosdesmata. May induce the formation of granular vesicles derived from the Endoplasmic reticulum, which align on actin filaments. This chain is Movement protein TGBp3, found in Trifolium (WCMV).